Reading from the N-terminus, the 360-residue chain is Chorismate synthase (360 aa).

NADP(+) is bound by residues Arg-48 and Arg-54. FMN-binding positions include 125 to 127 (RSS), 246 to 247 (NA), Gly-286, 301 to 305 (KPTSS), and Arg-327.

It belongs to the chorismate synthase family. In terms of assembly, homotetramer. The cofactor is FMNH2.

It carries out the reaction 5-O-(1-carboxyvinyl)-3-phosphoshikimate = chorismate + phosphate. The protein operates within metabolic intermediate biosynthesis; chorismate biosynthesis; chorismate from D-erythrose 4-phosphate and phosphoenolpyruvate: step 7/7. Catalyzes the anti-1,4-elimination of the C-3 phosphate and the C-6 proR hydrogen from 5-enolpyruvylshikimate-3-phosphate (EPSP) to yield chorismate, which is the branch point compound that serves as the starting substrate for the three terminal pathways of aromatic amino acid biosynthesis. This reaction introduces a second double bond into the aromatic ring system. The sequence is that of Chorismate synthase from Haemophilus ducreyi (strain 35000HP / ATCC 700724).